Reading from the N-terminus, the 238-residue chain is 6-phosphogluconolactonase (238 aa).

It belongs to the glucosamine/galactosamine-6-phosphate isomerase family. 6-phosphogluconolactonase subfamily.

The catalysed reaction is 6-phospho-D-glucono-1,5-lactone + H2O = 6-phospho-D-gluconate + H(+). It participates in carbohydrate degradation; pentose phosphate pathway; D-ribulose 5-phosphate from D-glucose 6-phosphate (oxidative stage): step 2/3. Hydrolysis of 6-phosphogluconolactone to 6-phosphogluconate. In Mesorhizobium japonicum (strain LMG 29417 / CECT 9101 / MAFF 303099) (Mesorhizobium loti (strain MAFF 303099)), this protein is 6-phosphogluconolactonase (pgl).